The sequence spans 199 residues: dITP/XTP pyrophosphatase (199 aa).

12-17 (SGNAGK) contacts substrate. D73 serves as the catalytic Proton acceptor. D73 is a binding site for Mg(2+). Residues S74, 157–160 (FGYD), K180, and 185–186 (HR) each bind substrate.

The protein belongs to the HAM1 NTPase family. Homodimer. Mg(2+) is required as a cofactor.

The enzyme catalyses XTP + H2O = XMP + diphosphate + H(+). It carries out the reaction dITP + H2O = dIMP + diphosphate + H(+). It catalyses the reaction ITP + H2O = IMP + diphosphate + H(+). Its function is as follows. Pyrophosphatase that catalyzes the hydrolysis of nucleoside triphosphates to their monophosphate derivatives, with a high preference for the non-canonical purine nucleotides XTP (xanthosine triphosphate), dITP (deoxyinosine triphosphate) and ITP. Seems to function as a house-cleaning enzyme that removes non-canonical purine nucleotides from the nucleotide pool, thus preventing their incorporation into DNA/RNA and avoiding chromosomal lesions. The polypeptide is dITP/XTP pyrophosphatase (Neisseria meningitidis serogroup A / serotype 4A (strain DSM 15465 / Z2491)).